Here is a 226-residue protein sequence, read N- to C-terminus: DNA mismatch repair protein MutH (226 aa).

The protein belongs to the MutH family.

Its subcellular location is the cytoplasm. In terms of biological role, sequence-specific endonuclease that cleaves unmethylated GATC sequences. It is involved in DNA mismatch repair. The sequence is that of DNA mismatch repair protein MutH from Vibrio parahaemolyticus serotype O3:K6 (strain RIMD 2210633).